The sequence spans 137 residues: Large ribosomal subunit protein uL16 (137 aa).

Residues 1–14 (MLQPNRRKFRKEHK) are compositionally biased toward basic residues. The segment at 1–22 (MLQPNRRKFRKEHKGRNEGLAT) is disordered.

The protein belongs to the universal ribosomal protein uL16 family. As to quaternary structure, part of the 50S ribosomal subunit.

Binds 23S rRNA and is also seen to make contacts with the A and possibly P site tRNAs. This Dechloromonas aromatica (strain RCB) protein is Large ribosomal subunit protein uL16.